The primary structure comprises 387 residues: UDP-N-acetylglucosamine--N-acetylmuramyl-(pentapeptide) pyrophosphoryl-undecaprenol N-acetylglucosamine transferase (387 aa).

Positions 1-22 (MSEHVRSAGPPQASTAPSGGSA) are disordered. Residues 41–43 (TGG), Asn158, Arg194, Ser222, Ile276, and Gln321 contribute to the UDP-N-acetyl-alpha-D-glucosamine site.

The protein belongs to the glycosyltransferase 28 family. MurG subfamily.

Its subcellular location is the cell inner membrane. The enzyme catalyses di-trans,octa-cis-undecaprenyl diphospho-N-acetyl-alpha-D-muramoyl-L-alanyl-D-glutamyl-meso-2,6-diaminopimeloyl-D-alanyl-D-alanine + UDP-N-acetyl-alpha-D-glucosamine = di-trans,octa-cis-undecaprenyl diphospho-[N-acetyl-alpha-D-glucosaminyl-(1-&gt;4)]-N-acetyl-alpha-D-muramoyl-L-alanyl-D-glutamyl-meso-2,6-diaminopimeloyl-D-alanyl-D-alanine + UDP + H(+). It participates in cell wall biogenesis; peptidoglycan biosynthesis. In terms of biological role, cell wall formation. Catalyzes the transfer of a GlcNAc subunit on undecaprenyl-pyrophosphoryl-MurNAc-pentapeptide (lipid intermediate I) to form undecaprenyl-pyrophosphoryl-MurNAc-(pentapeptide)GlcNAc (lipid intermediate II). The protein is UDP-N-acetylglucosamine--N-acetylmuramyl-(pentapeptide) pyrophosphoryl-undecaprenol N-acetylglucosamine transferase of Polaromonas sp. (strain JS666 / ATCC BAA-500).